A 196-amino-acid polypeptide reads, in one-letter code: Holliday junction branch migration complex subunit RuvA (196 aa).

The domain I stretch occupies residues Met-1 to Ala-63. The domain II stretch occupies residues Thr-64–Ala-142. The interval Pro-143 to Thr-146 is flexible linker. The interval Ala-147–Lys-196 is domain III.

This sequence belongs to the RuvA family. Homotetramer. Forms an RuvA(8)-RuvB(12)-Holliday junction (HJ) complex. HJ DNA is sandwiched between 2 RuvA tetramers; dsDNA enters through RuvA and exits via RuvB. An RuvB hexamer assembles on each DNA strand where it exits the tetramer. Each RuvB hexamer is contacted by two RuvA subunits (via domain III) on 2 adjacent RuvB subunits; this complex drives branch migration. In the full resolvosome a probable DNA-RuvA(4)-RuvB(12)-RuvC(2) complex forms which resolves the HJ.

It is found in the cytoplasm. Its function is as follows. The RuvA-RuvB-RuvC complex processes Holliday junction (HJ) DNA during genetic recombination and DNA repair, while the RuvA-RuvB complex plays an important role in the rescue of blocked DNA replication forks via replication fork reversal (RFR). RuvA specifically binds to HJ cruciform DNA, conferring on it an open structure. The RuvB hexamer acts as an ATP-dependent pump, pulling dsDNA into and through the RuvAB complex. HJ branch migration allows RuvC to scan DNA until it finds its consensus sequence, where it cleaves and resolves the cruciform DNA. The sequence is that of Holliday junction branch migration complex subunit RuvA from Streptococcus sanguinis (strain SK36).